The following is a 525-amino-acid chain: Bifunctional pantoate ligase/cytidylate kinase (525 aa).

The interval 1–292 (MDNVPIIRTV…VGSARLIDNM (292 aa)) is pantoate--beta-alanine ligase. 44–51 (MGALHAGH) contributes to the ATP binding site. His51 functions as the Proton donor in the catalytic mechanism. Gln75 provides a ligand contact to (R)-pantoate. Beta-alanine is bound at residue Gln75. 162 to 165 (GQKD) is an ATP binding site. Gln168 contributes to the (R)-pantoate binding site. Residues Ile191 and 199–202 (LSSR) contribute to the ATP site. Positions 293–525 (LLDARLPILA…LYQERFPDRA (233 aa)) are cytidylate kinase.

The protein in the N-terminal section; belongs to the pantothenate synthetase family. This sequence in the C-terminal section; belongs to the cytidylate kinase family. Type 1 subfamily.

Its subcellular location is the cytoplasm. The enzyme catalyses (R)-pantoate + beta-alanine + ATP = (R)-pantothenate + AMP + diphosphate + H(+). It catalyses the reaction CMP + ATP = CDP + ADP. The catalysed reaction is dCMP + ATP = dCDP + ADP. Its pathway is cofactor biosynthesis; (R)-pantothenate biosynthesis; (R)-pantothenate from (R)-pantoate and beta-alanine: step 1/1. In terms of biological role, catalyzes the condensation of pantoate with beta-alanine in an ATP-dependent reaction via a pantoyl-adenylate intermediate. Its function is as follows. Catalyzes the transfer of a phosphate group from ATP to either CMP or dCMP to form CDP or dCDP and ADP, respectively. The polypeptide is Bifunctional pantoate ligase/cytidylate kinase (Acaryochloris marina (strain MBIC 11017)).